We begin with the raw amino-acid sequence, 366 residues long: Ribosomal RNA large subunit methyltransferase M (366 aa).

S-adenosyl-L-methionine is bound by residues S188, C221–G224, D240, D260, and D277. K306 (proton acceptor) is an active-site residue.

This sequence belongs to the class I-like SAM-binding methyltransferase superfamily. RNA methyltransferase RlmE family. RlmM subfamily. As to quaternary structure, monomer.

It is found in the cytoplasm. It carries out the reaction cytidine(2498) in 23S rRNA + S-adenosyl-L-methionine = 2'-O-methylcytidine(2498) in 23S rRNA + S-adenosyl-L-homocysteine + H(+). Its function is as follows. Catalyzes the 2'-O-methylation at nucleotide C2498 in 23S rRNA. The sequence is that of Ribosomal RNA large subunit methyltransferase M from Klebsiella pneumoniae subsp. pneumoniae (strain ATCC 700721 / MGH 78578).